Here is a 91-residue protein sequence, read N- to C-terminus: Small ribosomal subunit protein bS20 (91 aa).

The disordered stretch occupies residues 72–91 (KNAASRQKSRLAKKLNGLSA).

Belongs to the bacterial ribosomal protein bS20 family.

In terms of biological role, binds directly to 16S ribosomal RNA. The polypeptide is Small ribosomal subunit protein bS20 (Halalkalibacterium halodurans (strain ATCC BAA-125 / DSM 18197 / FERM 7344 / JCM 9153 / C-125) (Bacillus halodurans)).